Consider the following 974-residue polypeptide: Villin-4 (974 aa).

6 Gelsolin-like repeats span residues 29-79, 150-190, 262-305, 394-451, 532-572, and 634-675; these read FIPT…DEAG, VHVK…QERA, GQAN…DDRK, LQVW…EERG, MQAI…TDQE, and LKVT…KNKL. Positions 738–783 are disordered; it reads VKNGGTPVADKPKRRTPASYGGRASVPDKSQQRSRSMSFSPDRVRV. A phosphoserine mark is found at Ser-777 and Ser-787. Disordered stretches follow at residues 801–833 and 845–930; these read NARNLSTPPPVVRKLYPRSVTPDSSKFAPAPKS and KIPP…PVSD. Residues 824-833 show a composition bias toward low complexity; it reads SSKFAPAPKS. Residues 872–887 are compositionally biased toward basic and acidic residues; the sequence is NSKEQEEKKENDKEEG. Residues 888-898 show a composition bias toward polar residues; the sequence is SMSSRIESLTI. Phosphoserine is present on Ser-890. The HP domain maps to 909-974; sequence EEDLPAHPYD…NKFKMAVQLF (66 aa). A compositionally biased stretch (basic and acidic residues) spans 912–921; it reads LPAHPYDRLK.

The protein belongs to the villin/gelsolin family. As to expression, preferentially expressed in vegetative tissues. Detected in the whole seedling, hypocotyl, cotyledon, primary root, roots hair cells and trichomes. Expressed in flowers but not in the silique.

The protein resides in the cytoplasm. It is found in the cytoskeleton. In terms of biological role, binds actin and actin filament bundles in a Ca(2+)-insensitive manner, but caps the barbed end of actin filaments and is able to sever them in a calcium-dependent manner. Involved in root hair growth through regulating actin organization in a Ca(2+)-dependent manner. The protein is Villin-4 of Arabidopsis thaliana (Mouse-ear cress).